The following is a 372-amino-acid chain: Delta-type opioid receptor (372 aa).

Residues 1 to 47 are Extracellular-facing; the sequence is MELVPSARAELQSSPLVNLSDAFPSAFPSAGANASGSPGARSASSLA. 2 N-linked (GlcNAc...) asparagine glycosylation sites follow: Asn18 and Asn33. Residues 48–75 traverse the membrane as a helical segment; that stretch reads LAIAITALYSAVCAVGLLGNVLVMFGIV. At 76-85 the chain is on the cytoplasmic side; the sequence is RYTKLKTATN. The chain crosses the membrane as a helical span at residues 86–110; the sequence is IYIFNLALADALATSTLPFQSAKYL. The Extracellular segment spans residues 111–122; sequence METWPFGELLCK. Cys121 and Cys198 form a disulfide bridge. The helical transmembrane segment at 123–144 threads the bilayer; sequence AVLSIDYYNMFTSIFTLTMMSV. Residues 145-163 are Cytoplasmic-facing; that stretch reads DRYIAVCHPVKALDFRTPA. A helical transmembrane segment spans residues 164–186; sequence KAKLINICIWVLASGVGVPIMVM. Over 187–206 the chain is Extracellular; sequence AVTQPRDGAVVCMLQFPSPS. Residues 207–238 form a helical membrane-spanning segment; that stretch reads WYWDTVTKICVFLFAFVVPILIITVCYGLMLL. Over 239 to 261 the chain is Cytoplasmic; that stretch reads RLRSVRLLSGSKEKDRSLRRITR. A helical membrane pass occupies residues 262–284; the sequence is MVLVVVGAFVVCWAPIHIFVIVW. The Extracellular portion of the chain corresponds to 285 to 299; the sequence is TLVDINRRDPLVVAA. The chain crosses the membrane as a helical span at residues 300–321; that stretch reads LHLCIALGYANSSLNPVLYAFL. Topologically, residues 322–372 are cytoplasmic; it reads DENFKRCFRQLCRTPCGRQEPGSLRRPRQATTRERVTACTPSDGPGGGAAA. A lipid anchor (S-palmitoyl cysteine) is attached at Cys333. The interval 340–372 is disordered; it reads QEPGSLRRPRQATTRERVTACTPSDGPGGGAAA.

It belongs to the G-protein coupled receptor 1 family. As to quaternary structure, may form homooligomers. Forms a heterodimer with OPRM1. Interacts with GPRASP1. Interacts with RTP4; the interaction promotes cell surface localization of the OPRD1-OPRM1 heterodimer. Ubiquitinated. A basal ubiquitination seems not to be related to degradation. Ubiquitination is increased upon formation of OPRM1:OPRD1 oligomers leading to proteasomal degradation; the ubiquitination is diminished by RTP4. In terms of tissue distribution, brain, with high concentrations in the basal ganglia and limbic regions.

The protein resides in the cell membrane. G-protein coupled receptor that functions as a receptor for endogenous enkephalins and for a subset of other opioids. Ligand binding causes a conformation change that triggers signaling via guanine nucleotide-binding proteins (G proteins) and modulates the activity of down-stream effectors, such as adenylate cyclase. Signaling leads to the inhibition of adenylate cyclase activity. Inhibits neurotransmitter release by reducing calcium ion currents and increasing potassium ion conductance. Plays a role in the perception of pain and in opiate-mediated analgesia. Plays a role in developing analgesic tolerance to morphine. The sequence is that of Delta-type opioid receptor (Oprd1) from Mus musculus (Mouse).